We begin with the raw amino-acid sequence, 382 residues long: Dual-specificity RNA methyltransferase RlmN (382 aa).

The Proton acceptor role is filled by Glu-91. The region spanning 97–339 is the Radical SAM core domain; sequence ETDRGTLCIS…TTVRKTRGDD (243 aa). Cys-104 and Cys-344 are disulfide-bonded. Residues Cys-111, Cys-115, and Cys-118 each contribute to the [4Fe-4S] cluster site. S-adenosyl-L-methionine-binding positions include 165–166, Ser-197, 219–221, and Asn-301; these read GE and SLH. Cys-344 (S-methylcysteine intermediate) is an active-site residue.

Belongs to the radical SAM superfamily. RlmN family. [4Fe-4S] cluster is required as a cofactor.

Its subcellular location is the cytoplasm. It carries out the reaction adenosine(2503) in 23S rRNA + 2 reduced [2Fe-2S]-[ferredoxin] + 2 S-adenosyl-L-methionine = 2-methyladenosine(2503) in 23S rRNA + 5'-deoxyadenosine + L-methionine + 2 oxidized [2Fe-2S]-[ferredoxin] + S-adenosyl-L-homocysteine. It catalyses the reaction adenosine(37) in tRNA + 2 reduced [2Fe-2S]-[ferredoxin] + 2 S-adenosyl-L-methionine = 2-methyladenosine(37) in tRNA + 5'-deoxyadenosine + L-methionine + 2 oxidized [2Fe-2S]-[ferredoxin] + S-adenosyl-L-homocysteine. Functionally, specifically methylates position 2 of adenine 2503 in 23S rRNA and position 2 of adenine 37 in tRNAs. m2A2503 modification seems to play a crucial role in the proofreading step occurring at the peptidyl transferase center and thus would serve to optimize ribosomal fidelity. In Polaromonas sp. (strain JS666 / ATCC BAA-500), this protein is Dual-specificity RNA methyltransferase RlmN.